We begin with the raw amino-acid sequence, 1026 residues long: Tyrosine-protein phosphatase 1 (1026 aa).

The region spanning 29 to 315 (IRCTVTFLDS…EQHTFFRLKT (287 aa)) is the FERM domain. Disordered regions lie at residues 376–396 (SIDS…LPSS), 430–456 (PLTT…SLRQ), 489–515 (GIHA…KSAN), and 584–616 (SFAS…DQVV). Residues 446-456 (DSESSAPSLRQ) show a composition bias toward polar residues. A compositionally biased stretch (low complexity) spans 600 to 609 (SPQSNKSSSP). The PDZ domain maps to 617–689 (TIKMRPDRHG…DHVVQFIRSA (73 aa)). Positions 753–1011 (VVDHFEMLYR…TFVCESILRA (259 aa)) constitute a Tyrosine-protein phosphatase domain. Substrate-binding positions include Asp920, 952 to 958 (CSAGIGR), and Gln996. Cys952 functions as the Phosphocysteine intermediate in the catalytic mechanism.

The protein belongs to the protein-tyrosine phosphatase family. Non-receptor class subfamily.

It is found in the cytoplasm. The protein resides in the cytoskeleton. It carries out the reaction O-phospho-L-tyrosyl-[protein] + H2O = L-tyrosyl-[protein] + phosphate. The protein is Tyrosine-protein phosphatase 1 (ptp-1) of Caenorhabditis elegans.